A 57-amino-acid polypeptide reads, in one-letter code: Large ribosomal subunit protein bL32A (57 aa).

Belongs to the bacterial ribosomal protein bL32 family.

This Streptomyces coelicolor (strain ATCC BAA-471 / A3(2) / M145) protein is Large ribosomal subunit protein bL32A (rpmF1).